Consider the following 149-residue polypeptide: Putative inactive group IIC secretory phospholipase A2 (149 aa).

A signal peptide spans 1 to 18 (MKVIAILTLLLFCSPTHS). Intrachain disulfides connect C44–C142, C77–C107, C95–C112, and C97–C105. Ca(2+) contacts are provided by Y45, G47, and G49.

The protein belongs to the phospholipase A2 family. The cofactor is Ca(2+).

Its subcellular location is the secreted. In terms of biological role, inactive phospholipase. This chain is Putative inactive group IIC secretory phospholipase A2 (PLA2G2C), found in Homo sapiens (Human).